The sequence spans 327 residues: MAWWKSWIEQEGVTVKSSSHFNPDPDAETLYKAMKGIGTNEQAIIDVLTKRSNTQRQQIAKSFKAQFGKDLTETLKSELSGKFERLIVALMYPPYRYEAKELHDAMKGLGTKEGVIIEILASRTKNQLREIMKAYEEDYGSSLEEDIQADTSGYLERILVCLLQGSRDDVSSFVDPGLALQDAQDLYAAGEKIRGTDEMKFITILCTRSATHLLRVFEEYEKIANKSIEDSIKSETHGSLEEAMLTVVKCTQNLHSYFAERLYYAMKGAGTRDGTLIRNIVSRSEIDLNLIKCHFKKMYGKTLSSMIMEDTSGDYKNALLSLVGSDP.

Annexin repeat units lie at residues 21–92, 93–164, 177–249, and 253–324; these read FNPD…ALMY, PPYR…CLLQ, GLAL…TVVK, and NLHS…SLVG. Ca(2+) is bound by residues methionine 266, glycine 268, glycine 270, and aspartate 310.

This sequence belongs to the annexin family.

Its function is as follows. This protein is an anticoagulant protein that acts as an indirect inhibitor of the thromboplastin-specific complex, which is involved in the blood coagulation cascade. This Homo sapiens (Human) protein is Annexin A8.